We begin with the raw amino-acid sequence, 198 residues long: Peptidyl-tRNA hydrolase (198 aa).

Residue tyrosine 18 participates in tRNA binding. Histidine 23 acts as the Proton acceptor in catalysis. 3 residues coordinate tRNA: phenylalanine 69, asparagine 71, and asparagine 117.

Belongs to the PTH family. As to quaternary structure, monomer.

Its subcellular location is the cytoplasm. The catalysed reaction is an N-acyl-L-alpha-aminoacyl-tRNA + H2O = an N-acyl-L-amino acid + a tRNA + H(+). Its function is as follows. Hydrolyzes ribosome-free peptidyl-tRNAs (with 1 or more amino acids incorporated), which drop off the ribosome during protein synthesis, or as a result of ribosome stalling. Functionally, catalyzes the release of premature peptidyl moieties from peptidyl-tRNA molecules trapped in stalled 50S ribosomal subunits, and thus maintains levels of free tRNAs and 50S ribosomes. The polypeptide is Peptidyl-tRNA hydrolase (Idiomarina loihiensis (strain ATCC BAA-735 / DSM 15497 / L2-TR)).